The sequence spans 78 residues: U-scoloptoxin(04)-Er1a (78 aa).

A signal peptide spans 1-24; it reads MTRHLIFAAVLLVCLFVCWNAIGA. The propeptide occupies 25-28; that stretch reads QDAR.

The protein belongs to the scoloptoxin-04 family. In terms of processing, contains 2 disulfide bonds. In terms of tissue distribution, expressed by the venom gland.

The protein resides in the secreted. The chain is U-scoloptoxin(04)-Er1a from Ethmostigmus rubripes (Giant centipede).